A 220-amino-acid polypeptide reads, in one-letter code: Response regulator protein TmoT (220 aa).

A Response regulatory domain is found at 21–135 (VIYIVDDDNA…DLLGAIRTAL (115 aa)). At D70 the chain carries 4-aspartylphosphate. An HTH luxR-type domain is found at 151–216 (LKASYESLSK…DLVRVTERLK (66 aa)). The H-T-H motif DNA-binding region spans 175–194 (NKQTALELDISEATVKVHRH).

Post-translationally, phosphorylated by TmoS.

The protein resides in the cytoplasm. Member of the two-component regulatory system TmoS/TmoT involved in the regulation of toluene degradation. Induces expression of tmoX operon. The chain is Response regulator protein TmoT (tmoT) from Ectopseudomonas mendocina (Pseudomonas mendocina).